Reading from the N-terminus, the 233-residue chain is DnaA regulatory inactivator Hda (233 aa).

The protein belongs to the DnaA family. HdA subfamily. The active form seems to be an ADP-bound monomer. Forms the RIDA complex (regulatory inactivation of DnaA) of ATP-DnaA, ADP-Hda and the DNA-loaded beta sliding clamp (dnaN).

Functionally, mediates the interaction of DNA replication initiator protein DnaA with DNA polymerase subunit beta sliding clamp (dnaN). Stimulates hydrolysis of ATP-DnaA to ADP-DnaA, rendering DnaA inactive for reinitiation, a process called regulatory inhibition of DnaA or RIDA. The sequence is that of DnaA regulatory inactivator Hda from Escherichia fergusonii (strain ATCC 35469 / DSM 13698 / CCUG 18766 / IAM 14443 / JCM 21226 / LMG 7866 / NBRC 102419 / NCTC 12128 / CDC 0568-73).